The primary structure comprises 213 residues: Orotate phosphoribosyltransferase (213 aa).

Lysine 26 contributes to the 5-phospho-alpha-D-ribose 1-diphosphate binding site. 34–35 (FF) provides a ligand contact to orotate. 5-phospho-alpha-D-ribose 1-diphosphate contacts are provided by residues 72–73 (YK), arginine 99, lysine 100, lysine 103, histidine 105, and 124–132 (DDVITAGTA). Residues threonine 128 and arginine 156 each coordinate orotate.

This sequence belongs to the purine/pyrimidine phosphoribosyltransferase family. PyrE subfamily. In terms of assembly, homodimer. Requires Mg(2+) as cofactor.

The catalysed reaction is orotidine 5'-phosphate + diphosphate = orotate + 5-phospho-alpha-D-ribose 1-diphosphate. It functions in the pathway pyrimidine metabolism; UMP biosynthesis via de novo pathway; UMP from orotate: step 1/2. Catalyzes the transfer of a ribosyl phosphate group from 5-phosphoribose 1-diphosphate to orotate, leading to the formation of orotidine monophosphate (OMP). This is Orotate phosphoribosyltransferase from Haemophilus influenzae (strain 86-028NP).